Consider the following 314-residue polypeptide: SERTA domain-containing protein 2 (314 aa).

One can recognise an SERTA domain in the interval 33 to 80 (YTLQRQTIFNISLMKLYNHRPLTEPSLQKTVLINNMLRRIQEELKQEG). Disordered regions lie at residues 77 to 119 (KQEG…HPCD) and 181 to 222 (PTST…SKLM). Positions 87–97 (TPSSQPTTEPS) are enriched in polar residues. Residues 182-193 (TSTSTEAATAAT) are compositionally biased toward low complexity. Positions 210 to 221 (GPQESRADDSKL) are enriched in basic and acidic residues. Positions 235-311 (TGFLTDLTLD…TELDHIMEVL (77 aa)) are required for transactivation activity. The Nuclear export signal (NES) signature appears at 238-243 (LTDLTL).

Interacts with XPO1; which mediates nuclear export. Interacts with TFDP1; modulates transactivation activity of TFDP1/E2F complexes. Post-translationally, polyubiquitinated, which promotes proteasomal degradation. As to expression, expressed in adipose tissue.

The protein localises to the nucleus. The protein resides in the cytoplasm. In terms of biological role, acts at E2F-responsive promoters as coregulator to integrate signals provided by PHD- and/or bromodomain-containing transcription factors. May act as coactivator as well as corepressor of E2F1-TFDP1 and E2F4-TFDP1 complexes on E2F consensus binding sites, which would activate or inhibit E2F-target genes expression. Modulates fat storage by down-regulating the expression of key genes involved in adipocyte lipolysis, thermogenesis and oxidative metabolism. The protein is SERTA domain-containing protein 2 (SERTAD2) of Homo sapiens (Human).